The following is a 68-amino-acid chain: Beta-defensin 1 (68 aa).

The N-terminal stretch at 1 to 21 (MRTSYLLLFTLCLLLSEMASG) is a signal peptide. Positions 22 to 32 (DNFLTGLGHRS) are excised as a propeptide. 3 cysteine pairs are disulfide-bonded: Cys-37–Cys-66, Cys-44–Cys-59, and Cys-49–Cys-67.

Belongs to the beta-defensin family. In terms of assembly, monomer. Homodimer.

The protein localises to the secreted. Its subcellular location is the membrane. Its function is as follows. Has bactericidal activity. May act as a ligand for C-C chemokine receptor CCR6. Positively regulates the sperm motility and bactericidal activity in a CCR6-dependent manner. Binds to CCR6 and triggers Ca2+ mobilization in the sperm which is important for its motility. In Hylobates moloch (Silvery gibbon), this protein is Beta-defensin 1 (DEFB1).